Consider the following 407-residue polypeptide: Myeloid cell nuclear differentiation antigen (407 aa).

Residues 1–88 form the Pyrin domain; sequence MVNEYKKILL…VNNLRKEKSK (88 aa). A disordered region spans residues 108–207; it reads EVGLAAPAPT…RQVDARRNVP (100 aa). Positions 131–137 match the Nuclear localization signal motif; sequence PVAQKRK. A compositionally biased stretch (basic and acidic residues) spans 139 to 148; sequence PNKEKTEAKR. Residues 177–190 are compositionally biased toward low complexity; sequence QTSSSTPSNTSFTP. One can recognise an HIN-200 domain in the interval 196–394; that stretch reads AQRQVDARRN…CGSHSFIKVI (199 aa).

As to quaternary structure, participates in a ternary complex with YY1 and the YY1 target DNA element. Binds nucleolin and nucleophosmin/NPM/B23. In terms of tissue distribution, expressed constitutively in cells of the myeloid lineage. Found in promyelocyte stage cells as well as in all other stage cells including peripheral blood monocytes and granulocytes. Also appears in myeloblast cells in some cases of acute myeloid Leukemia.

It is found in the nucleus. It localises to the cytoplasm. Functionally, may act as a transcriptional activator/repressor in the myeloid lineage. Plays a role in the granulocyte/monocyte cell-specific response to interferon. Stimulates the DNA binding of the transcriptional repressor protein YY1. The sequence is that of Myeloid cell nuclear differentiation antigen (MNDA) from Homo sapiens (Human).